The following is a 928-amino-acid chain: Arf guanine nucleotide exchange factor sec74 (928 aa).

Polar residues-rich tracts occupy residues 1-12 (MDESSRIASSSA) and 57-83 (TITSDTPKVSSQHSPVSSAYTGDSTTD). Disordered regions lie at residues 1 to 152 (MDES…RPSS) and 227 to 249 (SLSSNFSARTPASNQSSVSEDFG). A Phosphoserine modification is found at S67. 2 stretches are compositionally biased toward low complexity: residues 89-102 (GHSSSQKLSNKVSS) and 115-132 (SKSSSSQCSSPFLPTSSS). Positions 228 to 420 (LSSNFSARTP…ECFYDNITYT (193 aa)) constitute an SEC7 domain. Residues 234–245 (ARTPASNQSSVS) are compositionally biased toward polar residues. In terms of domain architecture, PH spans 548–677 (KVFKLGILIQ…WLVKINFVST (130 aa)).

It localises to the cytoplasm. The protein resides in the cell tip. Guanine nucleotide exchange factor for Arf GTPases, stimulating the nucleotide exchange from the GDP-bound to the GTP-bound form. Involved in vesicular transport. In Schizosaccharomyces pombe (strain 972 / ATCC 24843) (Fission yeast), this protein is Arf guanine nucleotide exchange factor sec74 (sec74).